The sequence spans 197 residues: Large ribosomal subunit protein uL18 (197 aa).

Belongs to the universal ribosomal protein uL18 family. As to quaternary structure, part of the 50S ribosomal subunit. Contacts the 5S and 23S rRNAs.

Its function is as follows. This is one of the proteins that bind and probably mediate the attachment of the 5S RNA into the large ribosomal subunit, where it forms part of the central protuberance. The sequence is that of Large ribosomal subunit protein uL18 from Sulfolobus acidocaldarius (strain ATCC 33909 / DSM 639 / JCM 8929 / NBRC 15157 / NCIMB 11770).